Consider the following 217-residue polypeptide: Somatotropin (217 aa).

The signal sequence occupies residues 1 to 26 (MMAAGPRTSLLLAFALLCLPWTQVVG). Histidine 46 contacts Zn(2+). The cysteines at positions 79 and 190 are disulfide-linked. Residue serine 132 is modified to Phosphoserine. A Zn(2+)-binding site is contributed by glutamate 199. An intrachain disulfide couples cysteine 207 to cysteine 215.

The protein belongs to the somatotropin/prolactin family.

The protein localises to the secreted. Plays an important role in growth control. Its major role in stimulating body growth is to stimulate the liver and other tissues to secrete IGF1. It stimulates both the differentiation and proliferation of myoblasts. It also stimulates amino acid uptake and protein synthesis in muscle and other tissues. The polypeptide is Somatotropin (GH1) (Bubalus bubalis (Domestic water buffalo)).